We begin with the raw amino-acid sequence, 312 residues long: Glyoxylate/hydroxypyruvate reductase A (312 aa).

Residue arginine 227 is part of the active site. The active-site Proton donor is the histidine 275.

Belongs to the D-isomer specific 2-hydroxyacid dehydrogenase family. GhrA subfamily.

The protein resides in the cytoplasm. It catalyses the reaction glycolate + NADP(+) = glyoxylate + NADPH + H(+). The enzyme catalyses (R)-glycerate + NAD(+) = 3-hydroxypyruvate + NADH + H(+). The catalysed reaction is (R)-glycerate + NADP(+) = 3-hydroxypyruvate + NADPH + H(+). In terms of biological role, catalyzes the NADPH-dependent reduction of glyoxylate and hydroxypyruvate into glycolate and glycerate, respectively. This is Glyoxylate/hydroxypyruvate reductase A from Escherichia coli O127:H6 (strain E2348/69 / EPEC).